A 505-amino-acid polypeptide reads, in one-letter code: Deoxyguanosinetriphosphate triphosphohydrolase (505 aa).

The HD domain maps to 66 to 273 (RLTHSMEVQQ…MEAADDISYC (208 aa)).

This sequence belongs to the dGTPase family. Type 1 subfamily. In terms of assembly, homotetramer. Mg(2+) serves as cofactor.

The catalysed reaction is dGTP + H2O = 2'-deoxyguanosine + triphosphate + H(+). In terms of biological role, dGTPase preferentially hydrolyzes dGTP over the other canonical NTPs. The chain is Deoxyguanosinetriphosphate triphosphohydrolase from Escherichia coli (strain K12 / MC4100 / BW2952).